Here is a 711-residue protein sequence, read N- to C-terminus: Exotoxin translocation ATP-binding protein PaxB (711 aa).

The Peptidase C39 domain occupies 1-129 (MEPLMSFKQK…QVFQGNVILL (129 aa)). The next 5 membrane-spanning stretches (helical) occupy residues 157-177 (IFVE…ITPL), 195-215 (LNVI…LSGL), 273-293 (ALTS…MWYY), 299-319 (IVIL…SPIL), and 392-412 (VMII…LSIG). An ABC transmembrane type-1 domain is found at 158–440 (FVEVMIVSIF…LAQLWQDFQQ (283 aa)). One can recognise an ABC transporter domain in the interval 472-707 (VTFKNIRFRY…KDGLYYYLNQ (236 aa)). Residue 506-513 (GRSGSGKS) participates in ATP binding.

It belongs to the ABC transporter superfamily. Protein-1 exporter (TC 3.A.1.109) family. As to quaternary structure, homodimer.

It is found in the cell inner membrane. It catalyses the reaction ATP + H2O + proteinSide 1 = ADP + phosphate + proteinSide 2.. Its function is as follows. Part of the ABC transporter complex PaxBD involved in PaxA export. Transmembrane domains (TMD) form a pore in the inner membrane and the ATP-binding domain (NBD) is responsible for energy generation. The chain is Exotoxin translocation ATP-binding protein PaxB (paxB) from Pasteurella aerogenes.